A 214-amino-acid polypeptide reads, in one-letter code: MKIILLGAPGAGKGTQAQFIMNKFGIPQISTGDMLRGAIKAGTDLGKQAKTLMDAGQLVPDDLIISLVKERVAQADCAKGFLLDGFPRTIPQADALKTVGIQIDYVLEFDVPDEVIVERMSGRRVHQASGRTYHVVYNPPKVEGKDDVTGEDLIIRADDKPETVLDRLKVYHSTTKPLVDYYQAEAKAGNTKYFRLDGTKKVEEVSQELDTILA.

10–15 (GAGKGT) is an ATP binding site. An NMP region spans residues 30–59 (STGDMLRGAIKAGTDLGKQAKTLMDAGQLV). AMP-binding positions include T31, R36, 57 to 59 (QLV), 85 to 88 (GFPR), and Q92. The tract at residues 122–159 (GRRVHQASGRTYHVVYNPPKVEGKDDVTGEDLIIRADD) is LID. ATP contacts are provided by residues R123 and 132–133 (TY). Positions 156 and 167 each coordinate AMP. K200 is an ATP binding site.

It belongs to the adenylate kinase family. Monomer.

It is found in the cytoplasm. The catalysed reaction is AMP + ATP = 2 ADP. It participates in purine metabolism; AMP biosynthesis via salvage pathway; AMP from ADP: step 1/1. Its function is as follows. Catalyzes the reversible transfer of the terminal phosphate group between ATP and AMP. Plays an important role in cellular energy homeostasis and in adenine nucleotide metabolism. This Pasteurella multocida (strain Pm70) protein is Adenylate kinase.